A 506-amino-acid polypeptide reads, in one-letter code: Galactose/methyl galactoside import ATP-binding protein MglA (506 aa).

2 consecutive ABC transporter domains span residues 14-249 (LTMT…VGRE) and 264-506 (VILE…AKYL). Position 46–53 (46–53 (GENGAGKS)) interacts with ATP.

Belongs to the ABC transporter superfamily. Galactose/methyl galactoside importer (TC 3.A.1.2.3) family. In terms of assembly, the complex is composed of one ATP-binding protein (MglA), two transmembrane proteins (MglC) and a solute-binding protein (MglB).

It is found in the cell inner membrane. The catalysed reaction is D-galactose(out) + ATP + H2O = D-galactose(in) + ADP + phosphate + H(+). It catalyses the reaction methyl beta-D-galactoside(out) + ATP + H2O = methyl beta-D-galactoside(in) + ADP + phosphate + H(+). In terms of biological role, part of the ABC transporter complex MglABC involved in galactose/methyl galactoside import. Responsible for energy coupling to the transport system. In Mannheimia succiniciproducens (strain KCTC 0769BP / MBEL55E), this protein is Galactose/methyl galactoside import ATP-binding protein MglA.